Reading from the N-terminus, the 322-residue chain is N-acetyl-gamma-glutamyl-phosphate reductase (322 aa).

Cys132 is an active-site residue.

This sequence belongs to the NAGSA dehydrogenase family. Type 1 subfamily.

Its subcellular location is the cytoplasm. It catalyses the reaction N-acetyl-L-glutamate 5-semialdehyde + phosphate + NADP(+) = N-acetyl-L-glutamyl 5-phosphate + NADPH + H(+). It participates in amino-acid biosynthesis; L-arginine biosynthesis; N(2)-acetyl-L-ornithine from L-glutamate: step 3/4. Functionally, catalyzes the NADPH-dependent reduction of N-acetyl-5-glutamyl phosphate to yield N-acetyl-L-glutamate 5-semialdehyde. This Parabacteroides distasonis (strain ATCC 8503 / DSM 20701 / CIP 104284 / JCM 5825 / NCTC 11152) protein is N-acetyl-gamma-glutamyl-phosphate reductase.